A 375-amino-acid chain; its full sequence is Chaperone protein DnaJ (375 aa).

The region spanning 5–70 (DYYEVLGVAR…NKRRAYDAHG (66 aa)) is the J domain. The segment at 131-208 (GIERRIEIPT…CHGAGRVEED (78 aa)) adopts a CR-type zinc-finger fold. Residues cysteine 144, cysteine 147, cysteine 160, cysteine 163, cysteine 182, cysteine 185, cysteine 196, and cysteine 199 each contribute to the Zn(2+) site. CXXCXGXG motif repeat units lie at residues 144 to 151 (CAPCHGSG), 160 to 167 (CGTCHGRG), 182 to 189 (CPHCDGRG), and 196 to 203 (CKTCHGAG).

This sequence belongs to the DnaJ family. In terms of assembly, homodimer. It depends on Zn(2+) as a cofactor.

Its subcellular location is the cytoplasm. Functionally, participates actively in the response to hyperosmotic and heat shock by preventing the aggregation of stress-denatured proteins and by disaggregating proteins, also in an autonomous, DnaK-independent fashion. Unfolded proteins bind initially to DnaJ; upon interaction with the DnaJ-bound protein, DnaK hydrolyzes its bound ATP, resulting in the formation of a stable complex. GrpE releases ADP from DnaK; ATP binding to DnaK triggers the release of the substrate protein, thus completing the reaction cycle. Several rounds of ATP-dependent interactions between DnaJ, DnaK and GrpE are required for fully efficient folding. Also involved, together with DnaK and GrpE, in the DNA replication of plasmids through activation of initiation proteins. The chain is Chaperone protein DnaJ from Xanthomonas euvesicatoria pv. vesicatoria (strain 85-10) (Xanthomonas campestris pv. vesicatoria).